The primary structure comprises 480 residues: Probable glycine dehydrogenase (decarboxylating) subunit 2 (480 aa).

The residue at position 265 (K265) is an N6-(pyridoxal phosphate)lysine.

Belongs to the GcvP family. C-terminal subunit subfamily. In terms of assembly, the glycine cleavage system is composed of four proteins: P, T, L and H. In this organism, the P 'protein' is a heterodimer of two subunits. The cofactor is pyridoxal 5'-phosphate.

It catalyses the reaction N(6)-[(R)-lipoyl]-L-lysyl-[glycine-cleavage complex H protein] + glycine + H(+) = N(6)-[(R)-S(8)-aminomethyldihydrolipoyl]-L-lysyl-[glycine-cleavage complex H protein] + CO2. Functionally, the glycine cleavage system catalyzes the degradation of glycine. The P protein binds the alpha-amino group of glycine through its pyridoxal phosphate cofactor; CO(2) is released and the remaining methylamine moiety is then transferred to the lipoamide cofactor of the H protein. This is Probable glycine dehydrogenase (decarboxylating) subunit 2 from Thermosipho africanus (strain TCF52B).